A 224-amino-acid chain; its full sequence is Probable GTP-binding protein EngB (224 aa).

Positions 27 to 201 (SGIEVAFAGR…DAIICQWLEQ (175 aa)) constitute an EngB-type G domain. GTP is bound by residues 35–42 (GRSNAGKS), 62–66 (GRTQL), 80–83 (DLPG), 147–150 (TKCD), and 180–182 (FSS). Ser42 and Thr64 together coordinate Mg(2+). A disordered region spans residues 205–224 (EYELPEEDDFDDSDEFTEEE).

It belongs to the TRAFAC class TrmE-Era-EngA-EngB-Septin-like GTPase superfamily. EngB GTPase family. Mg(2+) serves as cofactor.

In terms of biological role, necessary for normal cell division and for the maintenance of normal septation. This Colwellia psychrerythraea (strain 34H / ATCC BAA-681) (Vibrio psychroerythus) protein is Probable GTP-binding protein EngB.